Reading from the N-terminus, the 343-residue chain is S-adenosylmethionine:tRNA ribosyltransferase-isomerase (343 aa).

It belongs to the QueA family. Monomer.

It localises to the cytoplasm. It catalyses the reaction 7-aminomethyl-7-carbaguanosine(34) in tRNA + S-adenosyl-L-methionine = epoxyqueuosine(34) in tRNA + adenine + L-methionine + 2 H(+). Its pathway is tRNA modification; tRNA-queuosine biosynthesis. Functionally, transfers and isomerizes the ribose moiety from AdoMet to the 7-aminomethyl group of 7-deazaguanine (preQ1-tRNA) to give epoxyqueuosine (oQ-tRNA). This is S-adenosylmethionine:tRNA ribosyltransferase-isomerase from Natranaerobius thermophilus (strain ATCC BAA-1301 / DSM 18059 / JW/NM-WN-LF).